Reading from the N-terminus, the 424-residue chain is Histidine--tRNA ligase (424 aa).

Belongs to the class-II aminoacyl-tRNA synthetase family. Homodimer.

The protein localises to the cytoplasm. The enzyme catalyses tRNA(His) + L-histidine + ATP = L-histidyl-tRNA(His) + AMP + diphosphate + H(+). This chain is Histidine--tRNA ligase, found in Yersinia pestis bv. Antiqua (strain Antiqua).